We begin with the raw amino-acid sequence, 124 residues long: Urocortin (124 aa).

An N-terminal signal peptide occupies residues 1-25; sequence MRQAGRAALLAALLLLVQLCPGSSQ. Positions 23-46 are disordered; sequence SSQRSPEAAGVQDPSLRWSPGARN. A propeptide spanning residues 26-82 is cleaved from the precursor; sequence RSPEAAGVQDPSLRWSPGARNQGGGARALLLLLAERFPRRAGPGRLGLGTAGERPRR. V122 is subject to Valine amide.

The protein belongs to the sauvagine/corticotropin-releasing factor/urotensin I family. As to quaternary structure, interacts with CRHR1 and CRHR2 (via their N-terminal extracellular domain). As to expression, keratinocytes in epidermis and the outer and inner root sheaths of hair follicles, epithelium of sebaceous and sweat glands, erector pili muscle, cutaneous blood vessel walls, cutaneous nerves and dermal mononuclear cells. Detected in plasma cells in the lamia propria in colon mucosa (at protein level). Expressed in pituitary and adrenal glands. Detected in plasma cells in the lamia propria in colon mucosa.

It is found in the secreted. Its function is as follows. Acts in vitro to stimulate the secretion of adrenocorticotropic hormone (ACTH). Binds with high affinity to CRF receptor types 1, 2-alpha, and 2-beta. Plays a role in the establishment of normal hearing thresholds. Reduces food intake and regulates ghrelin levels in gastric body and plasma. The protein is Urocortin (UCN) of Homo sapiens (Human).